The sequence spans 169 residues: Peptide methionine sulfoxide reductase MsrA (169 aa).

Cys10 is an active-site residue.

Belongs to the MsrA Met sulfoxide reductase family.

The catalysed reaction is L-methionyl-[protein] + [thioredoxin]-disulfide + H2O = L-methionyl-(S)-S-oxide-[protein] + [thioredoxin]-dithiol. The enzyme catalyses [thioredoxin]-disulfide + L-methionine + H2O = L-methionine (S)-S-oxide + [thioredoxin]-dithiol. Its function is as follows. Has an important function as a repair enzyme for proteins that have been inactivated by oxidation. Catalyzes the reversible oxidation-reduction of methionine sulfoxide in proteins to methionine. The protein is Peptide methionine sulfoxide reductase MsrA of Streptococcus equi subsp. zooepidemicus (strain H70).